The following is a 430-amino-acid chain: L-cysteine:1D-myo-inositol 2-amino-2-deoxy-alpha-D-glucopyranoside ligase (430 aa).

C48 provides a ligand contact to Zn(2+). L-cysteinyl-5'-AMP-binding positions include 48–51 (CGIT), T63, and 86–88 (NIT). The short motif at 50-60 (ITPYDSTHLGH) is the 'HIGH' region element. The 'ERGGDP' region motif lies at 192–197 (ERGGDP). L-cysteinyl-5'-AMP is bound at residue W232. C236 is a Zn(2+) binding site. Position 254–256 (254–256 (GSD)) interacts with L-cysteinyl-5'-AMP. H261 serves as a coordination point for Zn(2+). I288 serves as a coordination point for L-cysteinyl-5'-AMP. The 'KMSKS' region motif lies at 294–298 (KMSKS).

This sequence belongs to the class-I aminoacyl-tRNA synthetase family. MshC subfamily. In terms of assembly, monomer. Zn(2+) serves as cofactor.

It carries out the reaction 1D-myo-inositol 2-amino-2-deoxy-alpha-D-glucopyranoside + L-cysteine + ATP = 1D-myo-inositol 2-(L-cysteinylamino)-2-deoxy-alpha-D-glucopyranoside + AMP + diphosphate + H(+). Catalyzes the ATP-dependent condensation of GlcN-Ins and L-cysteine to form L-Cys-GlcN-Ins. In Corynebacterium efficiens (strain DSM 44549 / YS-314 / AJ 12310 / JCM 11189 / NBRC 100395), this protein is L-cysteine:1D-myo-inositol 2-amino-2-deoxy-alpha-D-glucopyranoside ligase (mshC).